A 488-amino-acid chain; its full sequence is Probable indole-3-acetic acid-amido synthetase GH3.6 (488 aa).

It belongs to the IAA-amido conjugating enzyme family. Expressed in roots and callus.

In terms of biological role, may catalyze the synthesis of indole-3-acetic acid (IAA)-amino acid conjugates, providing a mechanism for the plant to cope with the presence of excess auxin. The chain is Probable indole-3-acetic acid-amido synthetase GH3.6 (GH3.6) from Oryza sativa subsp. japonica (Rice).